A 229-amino-acid chain; its full sequence is Lactate utilization protein C (229 aa).

Belongs to the LutC/YkgG family.

Its function is as follows. Is involved in L-lactate degradation and allows cells to grow with lactate as the sole carbon source. This Shouchella clausii (strain KSM-K16) (Alkalihalobacillus clausii) protein is Lactate utilization protein C.